The primary structure comprises 271 residues: High mobility group protein homolog TDP-1 (271 aa).

The DEK-C domain maps to 8–63 (GPLPTDIEETVITIMREEGVRYITAKILRMRLESKYQMEFGPHKAAIDDIVARAMQ). The segment at 75-118 (LKEKDASKSSGGKGSKRARSAGAEAPSKTKKEMTEKPKKPADYP) is disordered. Basic and acidic residues predominate over residues 101–116 (SKTKKEMTEKPKKPAD). 2 consecutive DNA-binding regions (HMG box) follow at residues 118–186 (PKPA…DEYK) and 206–270 (PKRA…AALP).

Its subcellular location is the nucleus. Its function is as follows. Unknown. May play a role in transcription and/or DNA replication. It is not known whether this protein is DNA sequence binding-specific or not. This is High mobility group protein homolog TDP-1 from Trypanosoma brucei rhodesiense.